The sequence spans 1553 residues: Sodium channel protein PaFPC1 (1553 aa).

The segment at 1 to 68 is disordered; the sequence is MADNSPLIRE…SAHPDQALEQ (68 aa). The Cytoplasmic portion of the chain corresponds to 1 to 140; sequence MADNSPLIRE…RVAISTMVQP (140 aa). A compositionally biased stretch (basic and acidic residues) spans 34–60; it reads ENGKTEENKDNSRDKGRGANKDRDGSA. Residues 141-159 traverse the membrane as a helical segment; it reads IFSYFIMITILIHCIFMIM. The Extracellular portion of the chain corresponds to 160–165; sequence PATQTT. A helical transmembrane segment spans residues 166–186; sequence YILELVFLSIYTIEVVVKVLA. The Cytoplasmic portion of the chain corresponds to 187 to 200; it reads RGFILHPFAYLRDP. A helical membrane pass occupies residues 201-218; the sequence is WNWLDFLVTLIGYITLVV. Topologically, residues 219–224 are extracellular; that stretch reads DLGHLY. A helical membrane pass occupies residues 225–241; it reads ALRAFRVLRSWRTVTIV. Topologically, residues 242-260 are cytoplasmic; it reads PGWRTIVDALSLSITSLKD. Residues 261–280 traverse the membrane as a helical segment; the sequence is LVLLLLFSLFVFAVLGLQIY. Topologically, residues 281–360 are extracellular; sequence MGVLTQKCVK…PNYGYTSFDT (80 aa). Intrachain disulfides connect Cys-288-Cys-337 and Cys-328-Cys-343. N-linked (GlcNAc...) asparagine glycans are attached at residues Asn-300, Asn-308, Asn-312, and Asn-330. An intramembrane region (pore-forming) is located at residues 361–385; it reads FGWAFLSVFRLVTLDYWEDLYQLAL. Glu-378 contributes to the saxitoxin binding site. The Extracellular segment spans residues 386–392; the sequence is RSAGPWH. Residues 393 to 413 traverse the membrane as a helical segment; the sequence is ILFFIIVVFYGTFCFLNFILA. The Cytoplasmic segment spans residues 414–519; sequence VVVMSYTHMV…GAIGAVVLSP (106 aa). The helical transmembrane segment at 520–538 threads the bilayer; sequence FFELFIAVIIVLNITFMAL. The Extracellular portion of the chain corresponds to 539-549; it reads DHHDMNIEFER. Residues 550–569 traverse the membrane as a helical segment; the sequence is ILRTGNYIFTSIYIVEAVLK. Residues 570–583 lie on the Cytoplasmic side of the membrane; sequence IIALSPKFYFKDSW. A helical transmembrane segment spans residues 584-603; the sequence is NVFDFIIVVFAILELGLEGV. At 604–605 the chain is on the extracellular side; it reads QG. Residues 606-623 traverse the membrane as a helical segment; the sequence is LSVFRSFRLLRVFRLAKF. The Cytoplasmic segment spans residues 624–639; sequence WPTLNNFMSVMTKSYG. A helical membrane pass occupies residues 640-658; the sequence is AFVNVMYVMFLLLFIFAII. Residues 659–686 lie on the Extracellular side of the membrane; it reads GMQLFGMNYIDNMERFPDGDLPRWNFTD. N-linked (GlcNAc...) asparagine glycosylation occurs at Asn-683. Positions 687-707 form an intramembrane region, pore-forming; it reads FLHSFMIVFRALCGEWIESMW. Residues Glu-701 and Glu-704 each contribute to the tetrodotoxin site. Residue Glu-704 participates in saxitoxin binding. At 708–719 the chain is on the extracellular side; the sequence is DCMLVGDWSCIP. A disulfide bridge links Cys-709 with Cys-717. Residues 720 to 740 form a helical membrane-spanning segment; sequence FFVAVFFVGNLVILNLLIALL. Topologically, residues 741–857 are cytoplasmic; it reads LNNYGSFCTS…VCFLLAKNKY (117 aa). The chain crosses the membrane as a helical span at residues 858-875; it reads FQKFVTAVLVITSVLLAL. The Extracellular portion of the chain corresponds to 876–888; the sequence is EDIYLPQRPVLVN. A helical membrane pass occupies residues 889 to 907; it reads ITLYVDYVLTAFFVIEMII. At 908-921 the chain is on the cytoplasmic side; that stretch reads MLFAVGFKKYFTSK. The chain crosses the membrane as a helical span at residues 922 to 940; that stretch reads WYWLDFIVVVAYLLNFVLM. Over 941–945 the chain is Extracellular; sequence CAGIE. Residues 946-964 form a helical membrane-spanning segment; sequence ALQTLRLLRVFRLFRPLSK. The Cytoplasmic portion of the chain corresponds to 965-981; the sequence is VNGMQVVTSTLVEAVPH. The helical transmembrane segment at 982–1001 threads the bilayer; sequence IFNVILVGIFFWLVFAIMGV. Residues 1002–1047 are Extracellular-facing; sequence QLFAGKFYKCVDENSTVLSHEITMDRNDCLHENYTWENSPMNFDHV. The cysteines at positions 1011 and 1030 are disulfide-linked. Asn-1015 carries N-linked (GlcNAc...) asparagine glycosylation. N-linked (GlcNAc...) asparagine; atypical glycosylation occurs at Asn-1028. Residue Asn-1034 is glycosylated (N-linked (GlcNAc...) asparagine). The segment at residues 1048–1069 is an intramembrane region (pore-forming); that stretch reads GNAYLSLLQVATFKGWLQIMND. A tetrodotoxin-binding site is contributed by Gly-1062. Residue Trp-1063 participates in saxitoxin binding. Residues 1070 to 1086 lie on the Extracellular side of the membrane; that stretch reads AIDSREVHKQPIRETNI. A helical membrane pass occupies residues 1087 to 1108; sequence YMYLYFIFFIVFGSFFILKLFV. The Cytoplasmic segment spans residues 1109–1171; it reads CILIDIFRQQ…LMYDISVNRK (63 aa). The segment at 1133–1146 is linker region that may regulate channel inactivation; the sequence is QLIYRRAVMRTMSA. Residues 1172-1189 traverse the membrane as a helical segment; it reads FEYTMMILIILNVAVMAI. Residues 1190-1200 are Extracellular-facing; it reads DHYGQSMEFSE. The helical transmembrane segment at 1201–1219 threads the bilayer; it reads VLDYLNLIFIIIFFVECVI. Residues 1220 to 1231 are Cytoplasmic-facing; the sequence is KVSGLRHHYFKD. Residues 1232-1249 form a helical membrane-spanning segment; it reads PWNIIDFLYVVLAIAGLM. Over 1250 to 1262 the chain is Extracellular; that stretch reads LSDVIEKYFISPT. The helical transmembrane segment at 1263–1279 threads the bilayer; that stretch reads LLRILRILRVGRLLRYF. The Cytoplasmic segment spans residues 1280 to 1298; that stretch reads QSARGMRLLLLALRKALRT. Residues 1299 to 1316 form a helical membrane-spanning segment; it reads LFNVSFLLFVIMFVYAVF. Residues 1317 to 1338 are Extracellular-facing; it reads GMEFFMHIRDAGAIDDVYNFKT. Positions 1339–1361 form an intramembrane region, pore-forming; sequence FGQSIILLFQLATSAGWDGVYFA. Tetrodotoxin is bound by residues Gly-1354 and Asp-1356. Position 1356 (Asp-1356) interacts with saxitoxin. Residues 1362–1387 are Extracellular-facing; sequence IANEEDCRAPDHELGYPGNCGSRALG. Cys-1368 and Cys-1381 are joined by a disulfide. Residues 1388 to 1410 form a helical membrane-spanning segment; that stretch reads IAYLVSYLIITCLVVINMYAAVI. Residues 1411-1553 are Cytoplasmic-facing; that stretch reads LDYVLEVYED…NAWRKHKQQN (143 aa).

This sequence belongs to the sodium channel (TC 1.A.1.10) family. As to expression, detected in adult nerve cord, muscle, gut and mushroom-shaped accessory glands.

The protein resides in the cell membrane. Inhibited by the pore blockers saxitoxin and tetrodotoxin. In terms of biological role, mediates the voltage-dependent sodium ion permeability of excitable membranes. The protein is Sodium channel protein PaFPC1 of Periplaneta americana (American cockroach).